Consider the following 71-residue polypeptide: Prokaryotic ubiquitin-like protein Pup (71 aa).

The segment covering M1–G18 has biased composition (low complexity). Positions M1–D42 are disordered. Positions E27–Y65 are ARC ATPase binding. The stretch at E31–E60 forms a coiled coil. An Isoglutamyl lysine isopeptide (Glu-Lys) (interchain with K-? in acceptor proteins) cross-link involves residue E71.

The protein belongs to the prokaryotic ubiquitin-like protein family. In terms of assembly, strongly interacts with the proteasome-associated ATPase ARC through a hydrophobic interface; the interacting region of Pup lies in its C-terminal half. There is one Pup binding site per ARC hexamer ring.

The protein operates within protein degradation; proteasomal Pup-dependent pathway. In terms of biological role, protein modifier that is covalently attached to lysine residues of substrate proteins, thereby targeting them for proteasomal degradation. The tagging system is termed pupylation. The chain is Prokaryotic ubiquitin-like protein Pup from Salinispora arenicola (strain CNS-205).